The following is a 215-amino-acid chain: S-crystallin 2 (215 aa).

In terms of domain architecture, GST N-terminal spans 2 to 80 (PSYTLNYFNH…YLAREFGFHG (79 aa)). In terms of domain architecture, GST C-terminal spans 82 to 215 (NNMEMARVEY…YLKKRSSTEF (134 aa)).

Belongs to the GST superfamily. Lens.

Functionally, S-crystallins are structural components of squids and octopi eye lens. Contains relatively little if any GST activity. The protein is S-crystallin 2 of Enteroctopus dofleini (North Pacific giant octopus).